Consider the following 698-residue polypeptide: Pentatricopeptide repeat-containing protein 1, mitochondrial (698 aa).

The interval 49–88 (SSSQLPLGQERQENTGSLGSDPSHSNSTATQEEDEEESFG) is disordered. Residues 62 to 78 (NTGSLGSDPSHSNSTAT) are compositionally biased toward polar residues. 6 PPR repeats span residues 133 to 169 (TPYW…RLQP), 170 to 204 (MESN…DLEP), 205 to 243 (SDAT…NFEL), 244 to 278 (NLKT…GHVV), 279 to 315 (TEET…GLQP), and 316 to 352 (SRDS…ATVL). Residues 392–419 (QALGPPEPPEARVPSKAQPEVDTKAEPS) are disordered. 3 PPR repeats span residues 517-551 (DLTF…GLVP), 552-583 (NLQT…QVTP), and 584-618 (NSHI…RVPV). Residues 670 to 698 (HPWQKFRTKPQEDQDTRKEADDGCALGGR) form a disordered region. The span at 678 to 690 (KPQEDQDTRKEAD) shows a compositional bias: basic and acidic residues.

This sequence belongs to the PTCD1 family. Associates with mitochondrial leucine tRNAs. Interacts with ELAC2.

Its subcellular location is the mitochondrion. It is found in the mitochondrion matrix. Mitochondrial protein implicated in negative regulation of leucine tRNA levels, as well as negative regulation of mitochondria-encoded proteins and COX activity. Also affects the 3'-processing of mitochondrial tRNAs. The polypeptide is Pentatricopeptide repeat-containing protein 1, mitochondrial (PTCD1) (Pongo abelii (Sumatran orangutan)).